A 597-amino-acid polypeptide reads, in one-letter code: Arginine--tRNA ligase (597 aa).

Residues 124–134 (PNVAKPLHVGH) carry the 'HIGH' region motif.

The protein belongs to the class-I aminoacyl-tRNA synthetase family. As to quaternary structure, monomer.

The protein resides in the cytoplasm. It catalyses the reaction tRNA(Arg) + L-arginine + ATP = L-arginyl-tRNA(Arg) + AMP + diphosphate. The sequence is that of Arginine--tRNA ligase from Agathobacter rectalis (strain ATCC 33656 / DSM 3377 / JCM 17463 / KCTC 5835 / VPI 0990) (Eubacterium rectale).